The sequence spans 203 residues: Non-specific lipid transfer protein GPI-anchored 20 (203 aa).

The N-terminal stretch at 1-21 is a signal peptide; the sequence is MSKIISLVVAMIAVLALPIRG. 4 disulfides stabilise this stretch: Cys29/Cys74, Cys40/Cys58, Cys59/Cys99, and Cys72/Cys108. N-linked (GlcNAc...) asparagine glycans are attached at residues Asn46, Asn50, and Asn88. Residues 119 to 182 form a disordered region; the sequence is GPAATFGPSM…TSRPSETPSS (64 aa). Composition is skewed to polar residues over residues 144–156 and 169–179; these read AAQTPQSDTTRPF and DGGSTSRPSET. The GPI-anchor amidated serine moiety is linked to residue Ser172. The propeptide at 173–203 is removed in mature form; that stretch reads TSRPSETPSSAYALSPSLLFFSIALVALKFY.

The protein belongs to the plant LTP family. As to expression, expressed in seedlings, preferentially in hypocotyls and roots. Also observed in siliques and sepals.

The protein resides in the cell membrane. In terms of biological role, probable lipid transfer protein. The protein is Non-specific lipid transfer protein GPI-anchored 20 of Arabidopsis thaliana (Mouse-ear cress).